Reading from the N-terminus, the 79-residue chain is Small ribosomal subunit protein bS18 (79 aa).

The protein belongs to the bacterial ribosomal protein bS18 family. As to quaternary structure, part of the 30S ribosomal subunit. Forms a tight heterodimer with protein bS6.

In terms of biological role, binds as a heterodimer with protein bS6 to the central domain of the 16S rRNA, where it helps stabilize the platform of the 30S subunit. The sequence is that of Small ribosomal subunit protein bS18 from Enterococcus faecalis (strain ATCC 700802 / V583).